The following is a 257-amino-acid chain: Thiazole synthase (257 aa).

The active-site Schiff-base intermediate with DXP is K98. 1-deoxy-D-xylulose 5-phosphate is bound by residues G159, 185-186, and 207-208; these read AG and NT.

Belongs to the ThiG family. Homotetramer. Forms heterodimers with either ThiH or ThiS.

The protein resides in the cytoplasm. It catalyses the reaction [ThiS sulfur-carrier protein]-C-terminal-Gly-aminoethanethioate + 2-iminoacetate + 1-deoxy-D-xylulose 5-phosphate = [ThiS sulfur-carrier protein]-C-terminal Gly-Gly + 2-[(2R,5Z)-2-carboxy-4-methylthiazol-5(2H)-ylidene]ethyl phosphate + 2 H2O + H(+). The protein operates within cofactor biosynthesis; thiamine diphosphate biosynthesis. Its function is as follows. Catalyzes the rearrangement of 1-deoxy-D-xylulose 5-phosphate (DXP) to produce the thiazole phosphate moiety of thiamine. Sulfur is provided by the thiocarboxylate moiety of the carrier protein ThiS. In vitro, sulfur can be provided by H(2)S. This Anaeromyxobacter sp. (strain Fw109-5) protein is Thiazole synthase.